The sequence spans 300 residues: MKIGHQFHTVALVGRSNTPGIAEPLASLAACIAKRGFEVVFEADTAQAIGSAGYPALTPAEIGARADVAVVLGGDGTMLGMGRQLAPYKTPLIGINHGRLGFITDIPASDMREVVPMMLAGSYEREERTLLEARIVRNGEPIYHALAFNDVVVNRSGFSGMAELRVSVDGRFMYNQRSDGLIVATPTGSTAYALSSQGPILHPQLQGIVLVPIAPHALSNRPIVLPDDSKIAIQIIGGRDVNVNFDMQSFTALELNDTIEVRRSKHTVPFLHPVGYSYYATLRKKLHWNEHPSSEEDDDA.

Asp-75 acts as the Proton acceptor in catalysis. NAD(+) is bound by residues 75 to 76 (DG), 149 to 150 (ND), Arg-177, Asp-179, 190 to 195 (TAYALS), Ala-214, and Gln-248.

The protein belongs to the NAD kinase family. Requires a divalent metal cation as cofactor.

The protein resides in the cytoplasm. The enzyme catalyses NAD(+) + ATP = ADP + NADP(+) + H(+). Functionally, involved in the regulation of the intracellular balance of NAD and NADP, and is a key enzyme in the biosynthesis of NADP. Catalyzes specifically the phosphorylation on 2'-hydroxyl of the adenosine moiety of NAD to yield NADP. In Burkholderia pseudomallei (strain K96243), this protein is NAD kinase.